The chain runs to 609 residues: Mitochondrial nucleoid-associated protein 1 (609 aa).

At 1 to 554 (MSDNPPRMEV…CNTTIRKSGF (554 aa)) the chain is on the extracellular side. 2 disordered regions span residues 133 to 163 (QEETKAQFYTSEKTSPKRELAEDLPKSGESR) and 406 to 425 (SPEGQLSLEPKSDSQFQASH). Over residues 146–161 (TSPKRELAEDLPKSGE) the composition is skewed to basic and acidic residues. Residues 555 to 571 (GGITMLSTGYFVLCCSW) traverse the membrane as a helical segment. Residues 572-609 (SFRRLKKLCRPLPWKSTVPPSVGVAKTTGDCRSKTCLD) lie on the Cytoplasmic side of the membrane.

The protein resides in the mitochondrion inner membrane. The protein localises to the mitochondrion matrix. Its subcellular location is the mitochondrion nucleoid. Its function is as follows. Critical regulator of mitochondrial DNA (mtDNA) abundance. Binds dsDNA throughout the mitochondrial genome without sequence specificity and controls mtDNA copy number by promoting its replication. Also plays important roles in mitochondrial metabolism and cell proliferation. The chain is Mitochondrial nucleoid-associated protein 1 from Pongo abelii (Sumatran orangutan).